Here is a 292-residue protein sequence, read N- to C-terminus: HTH-type transcriptional regulator BlaA (292 aa).

The region spanning 5 to 62 is the HTH lysR-type domain; that stretch reads LPLNALRAFEASARHLNFTKAALELYVTQGAVSQQVRMLEERLGVILFKRLPRGLEMT. The H-T-H motif DNA-binding region spans 22-41; the sequence is FTKAALELYVTQGAVSQQVR.

Belongs to the LysR transcriptional regulatory family.

Functionally, positive regulator of the expression of the gene (blaB) for beta-lactamase. In Proteus vulgaris, this protein is HTH-type transcriptional regulator BlaA (blaA).